Consider the following 75-residue polypeptide: Sec-independent protein translocase protein TatA (75 aa).

The helical transmembrane segment at 1–21 (MGSMSIWHWIVVLAVVLLLFG) threads the bilayer. The segment at 43–75 (MAEDDDAPAKPAEPPRAVPHQATPAPESEKKAV) is disordered.

It belongs to the TatA/E family. The Tat system comprises two distinct complexes: a TatABC complex, containing multiple copies of TatA, TatB and TatC subunits, and a separate TatA complex, containing only TatA subunits. Substrates initially bind to the TatABC complex, which probably triggers association of the separate TatA complex to form the active translocon.

The protein resides in the cell inner membrane. Part of the twin-arginine translocation (Tat) system that transports large folded proteins containing a characteristic twin-arginine motif in their signal peptide across membranes. TatA could form the protein-conducting channel of the Tat system. In Azorhizobium caulinodans (strain ATCC 43989 / DSM 5975 / JCM 20966 / LMG 6465 / NBRC 14845 / NCIMB 13405 / ORS 571), this protein is Sec-independent protein translocase protein TatA.